Here is a 576-residue protein sequence, read N- to C-terminus: Potassium-transporting ATPase potassium-binding subunit (576 aa).

12 helical membrane-spanning segments follow: residues 3–23 (IFLDIFSFILFFGILTIISPI), 68–88 (LYALLSFNFLGFLVLFLTLLF), 137–157 (GLALQNFLSAASGIVVALVLI), 179–199 (ILYVLLPVAFFSALFLVSQGV), 267–287 (FEAFLIILIPASLVFTFGYMI), 294–314 (WFLYSVMLFVLMLFMGIQYYF), 339–359 (FGIGGTVLFSSITTATSCGAV), 369–389 (LGGLVPMSLISLGEIIFGGVG), 391–411 (GLYGMIAMVIIAVFVAGLMIG), 430–450 (VVITLVSGITALLLTTLALYT), 495–515 (ITTGLAMLIGRFIPIIAVFYM), and 537–557 (LVFGVWLVFIIIVVGALTFLP).

The protein belongs to the KdpA family. In terms of assembly, the system is composed of three essential subunits: KdpA, KdpB and KdpC.

It localises to the cell inner membrane. Part of the high-affinity ATP-driven potassium transport (or Kdp) system, which catalyzes the hydrolysis of ATP coupled with the electrogenic transport of potassium into the cytoplasm. This subunit binds the periplasmic potassium ions and delivers the ions to the membrane domain of KdpB through an intramembrane tunnel. This Hydrogenobaculum sp. (strain Y04AAS1) protein is Potassium-transporting ATPase potassium-binding subunit.